The sequence spans 849 residues: Protein lap1 (849 aa).

LRR repeat units lie at residues 18–39 (VIDK…WQHE), 41–62 (TLEE…LFYC), 64–85 (GLRV…IGSL), 87–108 (QLQH…IKSC), 110–131 (HLTH…ITSL), 133–155 (SLQE…GRLV), 156–177 (NLRI…MVRL), 179–200 (NLQR…VGEL), 202–224 (SLRE…GKLR), 225–246 (DLQH…LSNW), 248–269 (NVEV…VGML), 271–292 (SLVT…ISYL), 294–315 (QLEE…IGML), 317–338 (SLRF…LCSC), 340–362 (QLSV…GNLS), 363–384 (KMKV…MLNL), and 386–407 (NLTS…QYLD). The disordered stretch occupies residues 716–752 (NNISNNLEPNPEEEDQELDDTMSQHSLNSTATNNTSK). Residues 725-735 (NPEEEDQELDD) are compositionally biased toward acidic residues. Positions 736-752 (TMSQHSLNSTATNNTSK) are enriched in polar residues. The 80-residue stretch at 770-849 (VKQVTLKWEN…TVMNIMLSRK (80 aa)) folds into the PDZ domain.

It belongs to the LAP (LRR and PDZ) protein family.

May have a role in assembling adherens junctions. In Drosophila melanogaster (Fruit fly), this protein is Protein lap1.